Consider the following 474-residue polypeptide: L-arabinose isomerase (474 aa).

Positions 306, 331, 348, and 447 each coordinate Mn(2+).

Belongs to the arabinose isomerase family. Mn(2+) is required as a cofactor.

The catalysed reaction is beta-L-arabinopyranose = L-ribulose. It functions in the pathway carbohydrate degradation; L-arabinose degradation via L-ribulose; D-xylulose 5-phosphate from L-arabinose (bacterial route): step 1/3. Its function is as follows. Catalyzes the conversion of L-arabinose to L-ribulose. This chain is L-arabinose isomerase, found in Pediococcus pentosaceus (strain ATCC 25745 / CCUG 21536 / LMG 10740 / 183-1w).